We begin with the raw amino-acid sequence, 394 residues long: Penicillopepsin-3 (394 aa).

An N-terminal signal peptide occupies residues M1 to A20. A propeptide spans V21–A70 (activation peptide). The Peptidase A1 domain occupies Y87 to A392. Catalysis depends on residues D103 and D284. A disulfide bond links C320 and C355.

The protein belongs to the peptidase A1 family. Monomer.

It localises to the secreted. The enzyme catalyses Hydrolysis of proteins with broad specificity similar to that of pepsin A, preferring hydrophobic residues at P1 and P1', but also cleaving 20-Gly-|-Glu-21 in the B chain of insulin. Clots milk, and activates trypsinogen.. Secreted aspartic endopeptidase that allows assimilation of proteinaceous substrates. The scissile peptide bond is attacked by a nucleophilic water molecule activated by two aspartic residues in the active site. Shows a broad primary substrate specificity. Favors hydrophobic residues at the P1 and P1' positions, but can also activate trypsinogen and hydrolyze the B chain of insulin between positions 'Gly-20' and 'Glu-21'. In Penicillium janthinellum (Penicillium vitale), this protein is Penicillopepsin-3.